Consider the following 180-residue polypeptide: Acireductone dioxygenase (180 aa).

Fe(2+)-binding residues include His-97, His-99, Glu-103, and His-141. His-97, His-99, Glu-103, and His-141 together coordinate Ni(2+).

The protein belongs to the acireductone dioxygenase (ARD) family. In terms of assembly, monomer. It depends on Fe(2+) as a cofactor. Ni(2+) is required as a cofactor.

It catalyses the reaction 1,2-dihydroxy-5-(methylsulfanyl)pent-1-en-3-one + O2 = 3-(methylsulfanyl)propanoate + CO + formate + 2 H(+). The catalysed reaction is 1,2-dihydroxy-5-(methylsulfanyl)pent-1-en-3-one + O2 = 4-methylsulfanyl-2-oxobutanoate + formate + 2 H(+). The protein operates within amino-acid biosynthesis; L-methionine biosynthesis via salvage pathway; L-methionine from S-methyl-5-thio-alpha-D-ribose 1-phosphate: step 5/6. Its function is as follows. Catalyzes 2 different reactions between oxygen and the acireductone 1,2-dihydroxy-3-keto-5-methylthiopentene (DHK-MTPene) depending upon the metal bound in the active site. Fe-containing acireductone dioxygenase (Fe-ARD) produces formate and 2-keto-4-methylthiobutyrate (KMTB), the alpha-ketoacid precursor of methionine in the methionine recycle pathway. Ni-containing acireductone dioxygenase (Ni-ARD) produces methylthiopropionate, carbon monoxide and formate, and does not lie on the methionine recycle pathway. This Serratia proteamaculans (strain 568) protein is Acireductone dioxygenase.